The sequence spans 360 residues: Chorismate synthase (360 aa).

Residues Arg48 and Arg54 each coordinate NADP(+). Residues 125–127 (RSS), 246–247 (NA), Gly286, 301–305 (KPTSS), and Arg327 each bind FMN.

Belongs to the chorismate synthase family. Homotetramer. FMNH2 serves as cofactor.

It catalyses the reaction 5-O-(1-carboxyvinyl)-3-phosphoshikimate = chorismate + phosphate. The protein operates within metabolic intermediate biosynthesis; chorismate biosynthesis; chorismate from D-erythrose 4-phosphate and phosphoenolpyruvate: step 7/7. In terms of biological role, catalyzes the anti-1,4-elimination of the C-3 phosphate and the C-6 proR hydrogen from 5-enolpyruvylshikimate-3-phosphate (EPSP) to yield chorismate, which is the branch point compound that serves as the starting substrate for the three terminal pathways of aromatic amino acid biosynthesis. This reaction introduces a second double bond into the aromatic ring system. The chain is Chorismate synthase from Actinobacillus pleuropneumoniae serotype 5b (strain L20).